Consider the following 391-residue polypeptide: Odorant receptor 67d (391 aa).

Residues 1–45 (MLKMAKVEPVERYCKVIRMIRFCVGFCGNDVADPNFRMWWLTYAV) are Cytoplasmic-facing. Residues 46–66 (MAAIAFFFACTGYTIYVGVVI) traverse the membrane as a helical segment. The Extracellular portion of the chain corresponds to 67-71 (NGDLT). Residues 72 to 92 (IILQALAMVGSAVQGLTKLLV) form a helical membrane-spanning segment. Topologically, residues 93-140 (TANNASHMREVQNTYEDIYREYGSKGDEYAKCLEKRIRITWTLLIGFM) are cytoplasmic. A helical membrane pass occupies residues 141 to 161 (LVYIILLGLVITFPIFYLLIL). At 162 to 164 (HQK) the chain is on the extracellular side. Residues 165–185 (VLVMQFLIPFLDHTTDGGHLI) form a helical membrane-spanning segment. At 186-191 (LTAAHV) the chain is on the cytoplasmic side. The helical transmembrane segment at 192–212 (ILITFGGFGNYGGDMYLFLFV) threads the bilayer. Residues 213–268 (THVPLIKDIFCVKLTEFNELVMKRNDFPKVRAMLCDLLVWHQLYTRMLQTTKKIYS) are Extracellular-facing. The helical transmembrane segment at 269–289 (IVLFVQLSTTCVGLLCTISCI) threads the bilayer. Topologically, residues 290–297 (FMKAWPAA) are cytoplasmic. The chain crosses the membrane as a helical span at residues 298–318 (PLYLLYAAITLYTFCGLGTLV). The Extracellular portion of the chain corresponds to 319–391 (ENSNEDFLSV…FSMMLMNYLG (73 aa)).

Belongs to the insect chemoreceptor superfamily. Heteromeric odorant receptor channel (TC 1.A.69) family. Or67d subfamily. As to quaternary structure, interacts with Orco. Complexes exist early in the endomembrane system in olfactory sensory neurons (OSNs), coupling these complexes to the conserved ciliary trafficking pathway. As to expression, expressed in antenna.

It localises to the cell membrane. Plays a role in detection and sensitivity to pheromones and signal transduction of the fatty-acid-derived male pheromone 11-cis vaccenyl acetate (cVA). Acts in concert with Snmp and lush to capture cVA molecules on the surface of Or67d expressing olfactory dendrites and facilitate their transfer to the odorant-receptor Orco complex. Necessary to mediate behavioral responses to cVA by regulating both male and female mating behavior. Activation of Or67d neurons by cVA inhibits courtship of other males, whereas in females their activation promotes receptivity to other males. May form a complex with Orco to form odorant-sensing units, providing sensitive and prolonged odorant signaling and calcium permeability. This chain is Odorant receptor 67d (Or67d), found in Drosophila melanogaster (Fruit fly).